The primary structure comprises 426 residues: Histone-binding protein RBBP7 (426 aa).

Ala-2 carries the post-translational modification N-acetylalanine. Ser-3 bears the Phosphoserine mark. Lys-4 is modified (N6-acetyllysine; alternate). A Glycyl lysine isopeptide (Lys-Gly) (interchain with G-Cter in SUMO2); alternate cross-link involves residue Lys-4. Residue Lys-4 forms a Glycyl lysine isopeptide (Lys-Gly) (interchain with G-Cter in ubiquitin); alternate linkage. At Thr-10 the chain carries Phosphothreonine. 7 WD repeats span residues 47 to 122 (QWLP…KINH), 128 to 173 (RARY…LRLR), 181 to 217 (GLSWNSNLSGHLLSASDDHTVCLWDINAGPKEGKIVD), 228 to 269 (VVED…HLVD), 275 to 312 (VNCLSFNPYSEFILATGSADKTVALWDLRNLKLKLHTF), 318 to 370 (EIFQ…LFIH), and 377 to 404 (ISDFSWNPNEPWVICSVSEDNIMQIWQM). Ser-95 is subject to Phosphoserine. Lys-101 is covalently cross-linked (Glycyl lysine isopeptide (Lys-Gly) (interchain with G-Cter in SUMO2)). N6-acetyllysine is present on Lys-119. Lys-155 is covalently cross-linked (Glycyl lysine isopeptide (Lys-Gly) (interchain with G-Cter in SUMO2)). Lys-159 is subject to N6-acetyllysine; alternate. Residue Lys-159 forms a Glycyl lysine isopeptide (Lys-Gly) (interchain with G-Cter in SUMO2); alternate linkage. Ser-355 carries the phosphoserine modification.

The protein belongs to the WD repeat RBAP46/RBAP48/MSI1 family. As to quaternary structure, binds directly to helix 1 of the histone fold of histone H4, a region that is not accessible when H4 is in chromatin. Subunit of the type B histone acetyltransferase (HAT) complex, composed of RBBP7 and HAT1. Subunit of the core histone deacetylase (HDAC) complex, which is composed of HDAC1, HDAC2, RBBP4 and RBBP7. The core HDAC complex associates with SIN3A, ARID4B/SAP180, SAP18, SAP30, SAP130, SUDS3/SAP45 and possibly ARID4A/RBP1 and ING1 to form the SIN3 HDAC complex. Component of the nucleosome remodeling and deacetylase (NuRD) repressor complex, composed of core proteins MTA1, MTA2, MTA3, RBBP4, RBBP7, HDAC1, HDAC2, MBD2, MBD3, and peripherally associated proteins CDK2AP1, CDK2AP2, GATAD2A, GATAD2B, CHD3, CHD4 and CHD5. The exact stoichiometry of the NuRD complex is unknown, and some subunits such as MBD2 and MBD3, GATAD2A and GATAD2B, and CHD3, CHD4 and CHD5 define mutually exclusive NuRD complexes. The NuRD complex may interact with MBD3L1. The NuRD complex may interact with MBD3L2. Subunit of the PRC2/EED-EZH2 complex, which is composed of at least EED, EZH2, RBBP4, RBBP7 and SUZ12. The PRC2/EED-EZH2 complex may also associate with HDAC1. Component of the NURF-1 ISWI chromatin remodeling complex (also called the nucleosome-remodeling factor (NURF) complex) at least composed of SMARCA1, BPTF, RBBP4 and RBBP7. Within the complex interacts with SMARCA1. Component of the BPFT-SMARCA1 complex at least composed of SMARCA1, BPFT, RBBP4 and RBBP7; the complex is catalytically inactive and does not remodel chromatin. Within the complex interacts with SMARCA1. Interacts with BRCA1. Interacts with CDK2AP1. Interacts with CENPA. Interacts with CHD3. Interacts with CHD4. Interacts with CREBBP, and this interaction may be enhanced by the binding of phosphorylated CREB1 to CREBBP. Interacts with HDAC7. Interacts with MTA1. Interacts with PWWP2B. Interacts with RB1 (via viral protein-binding domain). Interacts with SUV39H1.

It localises to the nucleus. Core histone-binding subunit that may target chromatin remodeling factors, histone acetyltransferases and histone deacetylases to their histone substrates in a manner that is regulated by nucleosomal DNA. Component of several complexes which regulate chromatin metabolism. These include the type B histone acetyltransferase (HAT) complex, which is required for chromatin assembly following DNA replication; the core histone deacetylase (HDAC) complex, which promotes histone deacetylation and consequent transcriptional repression; the nucleosome remodeling and histone deacetylase complex (the NuRD complex), which promotes transcriptional repression by histone deacetylation and nucleosome remodeling; and the PRC2/EED-EZH2 complex, which promotes repression of homeotic genes during development; and the NURF (nucleosome remodeling factor) complex. The protein is Histone-binding protein RBBP7 (RBBP7) of Pongo abelii (Sumatran orangutan).